Here is a 176-residue protein sequence, read N- to C-terminus: MIHAILKMGDPRLLRVAAPVERYDTPELRALIDDMFETMAHAQGVGLAAPQIGVDLQLVIFGFERNDRYPDAPAVPRTILCNPVIEPLSGEMEDGWEGCLSVPGLRGLVPRYRHIRYSGYDPAGQRIEREAEGFHARVVQHECDHLIGRLYPTRIRDLTKFGYTEVLFPEMDPNAD.

Residues cysteine 99 and histidine 141 each coordinate Fe cation. Residue glutamate 142 is part of the active site. Histidine 145 lines the Fe cation pocket.

It belongs to the polypeptide deformylase family. Requires Fe(2+) as cofactor.

It catalyses the reaction N-terminal N-formyl-L-methionyl-[peptide] + H2O = N-terminal L-methionyl-[peptide] + formate. In terms of biological role, removes the formyl group from the N-terminal Met of newly synthesized proteins. Requires at least a dipeptide for an efficient rate of reaction. N-terminal L-methionine is a prerequisite for activity but the enzyme has broad specificity at other positions. The polypeptide is Peptide deformylase 2 (Bordetella bronchiseptica (strain ATCC BAA-588 / NCTC 13252 / RB50) (Alcaligenes bronchisepticus)).